Reading from the N-terminus, the 573-residue chain is NEDD4-binding protein 3-A (573 aa).

Disordered stretches follow at residues Leu168–Leu216 and Leu382–Lys407. Polar residues-rich tracts occupy residues Gln184 to Ser196 and Asp207 to Leu216. Residues Val289 to Met539 are a coiled coil.

Belongs to the N4BP3 family.

The protein localises to the cytoplasmic vesicle. It localises to the cell projection. It is found in the axon. Its subcellular location is the dendrite. Its function is as follows. Plays a role in axon and dendrite arborization during cranial nerve development. Also important for neural crest migration and early development of other anterior structures including eye, brain and cranial cartilage. The protein is NEDD4-binding protein 3-A of Xenopus laevis (African clawed frog).